The sequence spans 185 residues: Adenine phosphoribosyltransferase (185 aa).

This sequence belongs to the purine/pyrimidine phosphoribosyltransferase family. As to quaternary structure, homodimer.

It is found in the cytoplasm. It carries out the reaction AMP + diphosphate = 5-phospho-alpha-D-ribose 1-diphosphate + adenine. The protein operates within purine metabolism; AMP biosynthesis via salvage pathway; AMP from adenine: step 1/1. Catalyzes a salvage reaction resulting in the formation of AMP, that is energically less costly than de novo synthesis. The sequence is that of Adenine phosphoribosyltransferase from Aliarcobacter butzleri (strain RM4018) (Arcobacter butzleri).